A 325-amino-acid polypeptide reads, in one-letter code: MTKSQQKLASIEQLSNQDGIISALAFDQRGALKRMMAEHQTEPPTVEQIEQLKVLVSEELTQYASSILLDPEYGLPASDARNKECGLLLAYEKTGYDVNAKGRLPDCLVEWSAKRLKEQGANAVKFLLYYDVDDSEEINIQKKAYIERIGSECVAEDIPFFLEVLTYDDNIPDNKSAEFAKVKPRKVNEAMKLFSEDRFNVDVLKVEVPVNMNFVEGFTEGEVVYTKEEAAQHFRDQEAATHLPYIYLSAGVSAELFQETLTFAHDAGAHFNGVLCGRATWSGAVKVYIEQGEQAAREWLRTTGYKNIDDLNKVLKTTATSWKAK.

Belongs to the aldolase LacD family.

It carries out the reaction D-tagatofuranose 1,6-bisphosphate = D-glyceraldehyde 3-phosphate + dihydroxyacetone phosphate. It functions in the pathway carbohydrate metabolism; D-tagatose 6-phosphate degradation; D-glyceraldehyde 3-phosphate and glycerone phosphate from D-tagatose 6-phosphate: step 2/2. The protein is Tagatose 1,6-diphosphate aldolase of Staphylococcus haemolyticus (strain JCSC1435).